Reading from the N-terminus, the 695-residue chain is Elongation factor G (695 aa).

A tr-type G domain is found at 8 to 282 (EKTRNIGIMA…AVLDYLPAPT (275 aa)). GTP-binding positions include 17 to 24 (AHIDAGKT), 81 to 85 (DTPGH), and 135 to 138 (NKMD).

Belongs to the TRAFAC class translation factor GTPase superfamily. Classic translation factor GTPase family. EF-G/EF-2 subfamily.

Its subcellular location is the cytoplasm. Functionally, catalyzes the GTP-dependent ribosomal translocation step during translation elongation. During this step, the ribosome changes from the pre-translocational (PRE) to the post-translocational (POST) state as the newly formed A-site-bound peptidyl-tRNA and P-site-bound deacylated tRNA move to the P and E sites, respectively. Catalyzes the coordinated movement of the two tRNA molecules, the mRNA and conformational changes in the ribosome. The chain is Elongation factor G from Listeria innocua serovar 6a (strain ATCC BAA-680 / CLIP 11262).